The primary structure comprises 374 residues: Dual-specificity RNA methyltransferase RlmN (374 aa).

E91 acts as the Proton acceptor in catalysis. One can recognise a Radical SAM core domain in the interval 97–340; the sequence is EDDRGTLCIS…TTVRKTRGDD (244 aa). A disulfide bridge links C104 with C345. C111, C115, and C118 together coordinate [4Fe-4S] cluster. Residues 165 to 166, S197, 219 to 221, and N302 contribute to the S-adenosyl-L-methionine site; these read GE and SLH. C345 acts as the S-methylcysteine intermediate in catalysis.

The protein belongs to the radical SAM superfamily. RlmN family. The cofactor is [4Fe-4S] cluster.

It is found in the cytoplasm. It carries out the reaction adenosine(2503) in 23S rRNA + 2 reduced [2Fe-2S]-[ferredoxin] + 2 S-adenosyl-L-methionine = 2-methyladenosine(2503) in 23S rRNA + 5'-deoxyadenosine + L-methionine + 2 oxidized [2Fe-2S]-[ferredoxin] + S-adenosyl-L-homocysteine. The catalysed reaction is adenosine(37) in tRNA + 2 reduced [2Fe-2S]-[ferredoxin] + 2 S-adenosyl-L-methionine = 2-methyladenosine(37) in tRNA + 5'-deoxyadenosine + L-methionine + 2 oxidized [2Fe-2S]-[ferredoxin] + S-adenosyl-L-homocysteine. Its function is as follows. Specifically methylates position 2 of adenine 2503 in 23S rRNA and position 2 of adenine 37 in tRNAs. m2A2503 modification seems to play a crucial role in the proofreading step occurring at the peptidyl transferase center and thus would serve to optimize ribosomal fidelity. In Acidovorax sp. (strain JS42), this protein is Dual-specificity RNA methyltransferase RlmN.